We begin with the raw amino-acid sequence, 907 residues long: Glutamate receptor 1 (907 aa).

The first 18 residues, 1 to 18 (MPYIFAFFCTGFLGAVVG), serve as a signal peptide directing secretion. Topologically, residues 19 to 536 (ANFPNNIQIG…GVFSFLDPLA (518 aa)) are extracellular. 6 N-linked (GlcNAc...) asparagine glycosylation sites follow: asparagine 63, asparagine 249, asparagine 257, asparagine 363, asparagine 401, and asparagine 406. The cysteines at positions 75 and 323 are disulfide-linked. Residues proline 492, threonine 494, and arginine 499 each contribute to the L-glutamate site. Residues 537–557 (YEIWMCIVFAYIGVSVVLFLV) traverse the membrane as a helical segment. Residues 558-584 (SRFSPYEWHSEEFEEGRDQTTSDQSNE) lie on the Cytoplasmic side of the membrane. Positions 585 to 600 (FGIFNSLWFSLGAFMQ) form an intramembrane region, helical; Pore-forming. An intramembrane segment occupies 601-603 (QGC). Cysteine 603 carries the S-palmitoyl cysteine lipid modification. Residues 604–609 (DISPRS) are Cytoplasmic-facing. Residues 610–630 (LSGRIVGGVWWFFTLIIISSY) traverse the membrane as a helical segment. The Extracellular segment spans residues 631–805 (TANLAAFLTV…DKTSALSLSN (175 aa)). Residue serine 645 is modified to Phosphoserine. 2 residues coordinate L-glutamate: serine 668 and threonine 669. At serine 710 the chain carries Phosphoserine. Glutamate 719 lines the L-glutamate pocket. An intrachain disulfide couples cysteine 732 to cysteine 787. The helical transmembrane segment at 806-826 (VAGVFYILIGGLGLAMLVALI) threads the bilayer. Over 827–907 (EFCYKSRSES…SGMPLGATGL (81 aa)) the chain is Cytoplasmic. Cysteine 829 carries S-palmitoyl cysteine lipidation. Serine 849 and serine 863 each carry phosphoserine. Positions 857 to 881 (STLPRNSGAGASGGSGSGENGRVVS) are disordered. Positions 866 to 875 (GASGGSGSGE) are enriched in gly residues. A PDZ-binding motif is present at residues 904–907 (ATGL).

This sequence belongs to the glutamate-gated ion channel (TC 1.A.10.1) family. GRIA1 subfamily. Homotetramer or heterotetramer of pore-forming glutamate receptor subunits. Heteromeric assembly can be the result of both receptor subtype and flip or flop form and according the composition, one partner can be dominant with respect to the fast desensitizing current component, whereas the other can determine the steady-state component. Tetramers may be formed by the dimerization of dimers. Found in a complex with GRIA2, GRIA3, GRIA4, CNIH2, CNIH3, CACNG2, CACNG3, CACNG4, CACNG5, CACNG7 and CACNG8. Interacts with HIP1 and RASGRF2. Interacts with SYNDIG1 and GRIA2. Interacts with DLG1 (via C-terminus). Interacts with LRFN1. Interacts with PRKG2. Interacts with CNIH2 and CACNG2. Interacts with CACNG5; this interaction modulates the gating. Interacts (via C-terminus) with PDLIM4 (via LIM domain); this interaction as well as the interaction of PDLIM4 with alpha-actinin is required for their colocalization in early endosomes. Interacts with SNX27 (via PDZ domain); the interaction is required for recycling to the plasma membrane when endocytosed and prevent degradation in lysosomes. Interacts (via PDZ-binding motif) with SHANK3 (via PDZ domain). Interacts with CACNG3; associates GRIA1 with the adapter protein complex 4 (AP-4) to target GRIA1 to the somatodendritic compartment of neurons. Interacts with CACNG2; this interaction mediates traffick to the plasma membrane and modulation of desensitization. Interacts with CNIH2 and CNIH3; this interaction promotes expression at the plasma membrane and extensively modulates their gating properties by slowing deactivation and desensitization kinetics. Found in a complex with GRIA2, GRIA3, GRIA4, DLG4, CACNG8 and CNIH2. In terms of processing, phosphorylated at Ser-645. Phosphorylated at Ser-710 by PKC. Phosphorylated at Ser-849 by PKC, PKA and CAMK2. Phosphorylated at Ser-863 by PKC, PKA and PRKG2. Phosphorylation of Ser-863 is reduced by induction of long-term depression and increased by induction of long-term potentiation. Palmitoylated. Depalmitoylated by CPT1C and upon L-glutamate stimulation. ZDHHC3/GODZ specifically palmitoylates Cys-603, which leads to Golgi retention and decreased cell surface expression. In contrast, Cys-829 palmitoylation does not affect cell surface expression but regulates stimulation-dependent endocytosis. In terms of tissue distribution, expressed in the outer plexiform layer of the retina of the eye (at protein level). Expressed in the forebrain and hippocampus (at protein level).

The protein resides in the cell membrane. It is found in the endoplasmic reticulum membrane. Its subcellular location is the postsynaptic cell membrane. The protein localises to the postsynaptic density membrane. It localises to the cell projection. The protein resides in the dendrite. It is found in the dendritic spine. Its subcellular location is the early endosome membrane. The protein localises to the recycling endosome membrane. It localises to the presynapse. The protein resides in the synapse. The catalysed reaction is Ca(2+)(in) = Ca(2+)(out). It catalyses the reaction Na(+)(in) = Na(+)(out). The enzyme catalyses Mg(2+)(in) = Mg(2+)(out). It carries out the reaction Li(+)(in) = Li(+)(out). The catalysed reaction is K(+)(in) = K(+)(out). It catalyses the reaction Sr(2+)(in) = Sr(2+)(out). In terms of biological role, ionotropic glutamate receptor that functions as a ligand-gated cation channel, gated by L-glutamate and glutamatergic agonists such as alpha-amino-3-hydroxy-5-methyl-4-isoxazolepropionic acid (AMPA), quisqualic acid, and kainic acid. L-glutamate acts as an excitatory neurotransmitter at many synapses in the central nervous system. Binding of the excitatory neurotransmitter L-glutamate induces a conformation change, leading to the opening of the cation channel, and thereby converts the chemical signal to an electrical impulse upon entry of monovalent and divalent cations such as sodium and calcium. The receptor then desensitizes rapidly and enters in a transient inactive state, characterized by the presence of bound agonist. In the presence of CACNG2 or CACNG4 or CACNG7 or CACNG8, shows resensitization which is characterized by a delayed accumulation of current flux upon continued application of L-glutamate. Calcium (Ca(2+)) permeability depends on subunits composition and, heteromeric channels containing edited GRIA2 subunit are calcium-impermeable. Also permeable to other divalents cations such as strontium(2+) and magnesium(2+) and monovalent cations such as potassium(1+) and lithium(1+). This is Glutamate receptor 1 from Mus musculus (Mouse).